Consider the following 223-residue polypeptide: MTTNYAHYIDHTLLAMDATEAQIIKLCEEAKQHHFYAVCVNSGYVPVAAQQLAGSSVKVCSVIGFPLGAGLTAAKAFEAQAAINAGAQEIDMVINVGWLKSGKIADVKADIKAVRDNCAATPLKVILETCLLSDEQIVQVCKMCRELDVAFVKTSTGFSTGGAKEEHVKLMRATVGPVMGVKASGAVRDRATAETMIQAGATRIGTSSGVAIVSGQQAAASGY.

The Proton donor/acceptor role is filled by D91. K153 serves as the catalytic Schiff-base intermediate with acetaldehyde. The active-site Proton donor/acceptor is the K182.

It belongs to the DeoC/FbaB aldolase family. DeoC type 1 subfamily.

It is found in the cytoplasm. It catalyses the reaction 2-deoxy-D-ribose 5-phosphate = D-glyceraldehyde 3-phosphate + acetaldehyde. Its pathway is carbohydrate degradation; 2-deoxy-D-ribose 1-phosphate degradation; D-glyceraldehyde 3-phosphate and acetaldehyde from 2-deoxy-alpha-D-ribose 1-phosphate: step 2/2. Catalyzes a reversible aldol reaction between acetaldehyde and D-glyceraldehyde 3-phosphate to generate 2-deoxy-D-ribose 5-phosphate. The protein is Deoxyribose-phosphate aldolase of Yersinia pseudotuberculosis serotype O:1b (strain IP 31758).